The chain runs to 757 residues: Relaxin receptor 1 (757 aa).

Over 1 to 408 (MTSGSVFFYI…LENLLASIIQ (408 aa)) the chain is Extracellular. The 38-residue stretch at 26-63 (KCSLGYFPCGNITKCLPQLLHCNGVDDCGNQADEDNCG) folds into the LDL-receptor class A domain. Intrachain disulfides connect Cys-27/Cys-40, Cys-34/Cys-53, and Cys-47/Cys-62. The N-linked (GlcNAc...) asparagine glycan is linked to Asn-36. Residues Leu-45, Asn-48, Val-50, Asp-52, Asp-58, and Glu-59 each contribute to the Ca(2+) site. The region spanning 91-127 (ETPECLVGSVPVQCLCRGLELDCDETNLRAVPSVSSN) is the LRRNT domain. Residue Asn-127 is glycosylated (N-linked (GlcNAc...) asparagine). 9 LRR repeats span residues 151–172 (DLQKLYLQNNKITSISIYAFRG), 175–196 (SLTKLYLSHNRITFLKPGVFED), 199–220 (RLEWLIIEDNHLSRISPPTFYG), 223–244 (SLILLVLMNNVLTRLPDKPLCQ), 248–269 (RLHWLDLEGNHIHNLRNLTLIS), 272–293 (NLTVLVMGKNKINHLNENTFAP), 296–317 (KLDELDLGSNKIENLPPLIFKD), 320–341 (ELSQLNLSYNPIQKIQANQFDY), and 344–365 (KLKSLSLEGIEISNIQQRMFRP). N-linked (GlcNAc...) asparagine glycosylation is found at Asn-264 and Asn-272. Residue Asn-325 is glycosylated (N-linked (GlcNAc...) asparagine). N-linked (GlcNAc...) asparagine glycosylation occurs at Asn-368. Residues 409-429 (RVFVWVVSAVTCFGNVFVICM) form a helical membrane-spanning segment. Residues 430–443 (RPYIRSENKLYAMS) are Cytoplasmic-facing. The helical transmembrane segment at 444 to 464 (IISLCCADCLMGIYLFVIGGF) threads the bilayer. Topologically, residues 465 to 486 (DLKFRGEYNKHAQLWMESTHCQ) are extracellular. A disulfide bond links Cys-485 and Cys-563. Residues 487 to 507 (LVGSLAILSTEVSVLLLTFLT) form a helical membrane-spanning segment. At 508–527 (LEKYICIVYPFRCVRPGKCR) the chain is on the cytoplasmic side. The helical transmembrane segment at 528–548 (TITVLILIWITGFIVAFIPLS) threads the bilayer. At 549–577 (NKEFFKNYYGTNGVCFPLHSEDTESIGAQ) the chain is on the extracellular side. The chain crosses the membrane as a helical span at residues 578–598 (VYSVAIFLGINLAAFIIIVFS). Topologically, residues 599–629 (YGSMFYSVHQSAITATEIRNQVKKEMILAKR) are cytoplasmic. Residues 630–650 (FFFIVFTDALCWIPIFVVKFL) form a helical membrane-spanning segment. Over 651–660 (SLLQVEIPGT) the chain is Extracellular. Residues 661–681 (ITSWVVIFILPINSALNPILY) traverse the membrane as a helical segment. Residues 682–757 (TLTTRPFKEM…SQSTRLNSYS (76 aa)) are Cytoplasmic-facing.

The protein belongs to the G-protein coupled receptor 1 family. As to quaternary structure, interacts with C1QTNF8.

Its subcellular location is the cell membrane. In terms of biological role, receptor for relaxins. The activity of this receptor is mediated by G proteins leading to stimulation of adenylate cyclase and an increase of cAMP. Binding of the ligand may also activate a tyrosine kinase pathway that inhibits the activity of a phosphodiesterase that degrades cAMP. The sequence is that of Relaxin receptor 1 (RXFP1) from Pongo abelii (Sumatran orangutan).